A 135-amino-acid chain; its full sequence is Small ribosomal subunit protein bS16m (135 aa).

The N-terminal 34 residues, 1 to 34 (MVQLTTIFCKAYHGGHLTIRLALGGCTNRPFYRI), are a transit peptide targeting the mitochondrion.

It belongs to the bacterial ribosomal protein bS16 family. As to quaternary structure, component of the mitochondrial ribosome small subunit (28S) which comprises a 12S rRNA and about 30 distinct proteins.

The protein resides in the mitochondrion. This chain is Small ribosomal subunit protein bS16m (Mrps16), found in Mus musculus (Mouse).